The chain runs to 107 residues: Phosphoribosyl-ATP pyrophosphatase (107 aa).

The protein belongs to the PRA-PH family.

Its subcellular location is the cytoplasm. The catalysed reaction is 1-(5-phospho-beta-D-ribosyl)-ATP + H2O = 1-(5-phospho-beta-D-ribosyl)-5'-AMP + diphosphate + H(+). The protein operates within amino-acid biosynthesis; L-histidine biosynthesis; L-histidine from 5-phospho-alpha-D-ribose 1-diphosphate: step 2/9. The polypeptide is Phosphoribosyl-ATP pyrophosphatase (Bacillus cytotoxicus (strain DSM 22905 / CIP 110041 / 391-98 / NVH 391-98)).